We begin with the raw amino-acid sequence, 461 residues long: Proton extrusion protein PxcA (461 aa).

Helical transmembrane passes span 244–264 (FMLL…ALIV), 339–359 (LKNI…VFTG), 386–406 (IILF…EVLV), and 421–441 (FINM…KYWI).

Belongs to the CemA family.

Its subcellular location is the cell inner membrane. Its function is as follows. Required for H(+) efflux immediately after light irradiation to form a rapid H(+) concentration gradient across the thylakoid membranes. Together with PxcL, contributes to transient H(+) uptake following dark to light transition. This is Proton extrusion protein PxcA from Thermosynechococcus vestitus (strain NIES-2133 / IAM M-273 / BP-1).